Here is a 295-residue protein sequence, read N- to C-terminus: Putative NADH-ubiquinone oxidoreductase MJ0520 (295 aa).

A run of 8 helical transmembrane segments spans residues 8–28 (LIGAINLTIHAFLVGSLLLGL), 69–89 (LYIFVALLDIAIWLAALIIAI), 129–149 (VFSAAAEVPLFAVVAAIYLTT), 163–183 (IHGSLLFKMPICAFAFFILLV), 199–219 (IVSGYMTEHYGLLGAIIYIAE), 220–240 (AIAYFVLLWLFIAVFIGPLVI), 243–263 (PVLTLAVMVVMTVILAFVNGL), and 273–293 (VMLQMTIAGLVLCDVLYRLIV).

It belongs to the complex I subunit 1 family.

It is found in the cell membrane. It carries out the reaction a ubiquinone + NADH + 5 H(+)(in) = a ubiquinol + NAD(+) + 4 H(+)(out). In Methanocaldococcus jannaschii (strain ATCC 43067 / DSM 2661 / JAL-1 / JCM 10045 / NBRC 100440) (Methanococcus jannaschii), this protein is Putative NADH-ubiquinone oxidoreductase MJ0520.